Consider the following 425-residue polypeptide: Serine--tRNA ligase (425 aa).

L-serine is bound at residue 230–232 (TAE). 261–263 (RSE) contributes to the ATP binding site. Residue E284 coordinates L-serine. 348-351 (EISS) serves as a coordination point for ATP. L-serine is bound at residue S384.

This sequence belongs to the class-II aminoacyl-tRNA synthetase family. Type-1 seryl-tRNA synthetase subfamily. As to quaternary structure, homodimer. The tRNA molecule binds across the dimer.

It localises to the cytoplasm. The catalysed reaction is tRNA(Ser) + L-serine + ATP = L-seryl-tRNA(Ser) + AMP + diphosphate + H(+). The enzyme catalyses tRNA(Sec) + L-serine + ATP = L-seryl-tRNA(Sec) + AMP + diphosphate + H(+). It functions in the pathway aminoacyl-tRNA biosynthesis; selenocysteinyl-tRNA(Sec) biosynthesis; L-seryl-tRNA(Sec) from L-serine and tRNA(Sec): step 1/1. Functionally, catalyzes the attachment of serine to tRNA(Ser). Is also able to aminoacylate tRNA(Sec) with serine, to form the misacylated tRNA L-seryl-tRNA(Sec), which will be further converted into selenocysteinyl-tRNA(Sec). In Streptococcus equi subsp. zooepidemicus (strain MGCS10565), this protein is Serine--tRNA ligase.